We begin with the raw amino-acid sequence, 475 residues long: Mucin-1 (475 aa).

Positions 1–23 are cleaved as a signal peptide; it reads MTPGTQSLFFLLLLLTVLTVVTG. The segment at 23–252 is disordered; the sequence is GSGHASSTPG…SPLTSSNHST (230 aa). Residues 24-380 are Extracellular-facing; the sequence is SGHASSTPGG…QSGAGVPGWG (357 aa). Residues 38 to 48 show a composition bias toward polar residues; sequence SATQRSSMPSS. Residues 54–75 show a composition bias toward low complexity; sequence VSMTSSVLSSHSPGSGSSTTQG. 5 tandem repeats follow at residues 86 to 105, 106 to 125, 126 to 145, 146 to 165, and 166 to 185. Residues 86-185 are 5 X 20 AA approximate tandem repeats; that stretch reads PASGSAATWG…HNVTSASGSA (100 aa). Residues 90-102 show a composition bias toward polar residues; it reads SAATWGQDVTSVP. Threonine 93 and threonine 99 each carry an O-linked (GalNAc...) threonine glycan. Residue serine 100 is glycosylated (O-linked (GalNAc...) serine). The O-linked (GalNAc...) threonine glycan is linked to threonine 104. Over residues 109 to 122 the composition is skewed to polar residues; sequence GSTTSPAQDVTSAP. The N-linked (GlcNAc...) asparagine glycan is linked to asparagine 177. Residues 180–190 are compositionally biased toward low complexity; sequence SASGSASGSAS. 2 stretches are compositionally biased toward polar residues: residues 191-213 and 233-252; these read TLVH…TPFS and DASS…NHST. 4 N-linked (GlcNAc...) asparagine glycosylation sites follow: asparagine 195, asparagine 249, asparagine 275, and asparagine 353. The SEA domain occupies 259–368; it reads GVSFFFLSFH…VSVSDVPFPF (110 aa). A helical transmembrane segment spans residues 381–401; the sequence is IALLVLVCVLVALAIVYLIAL. The Cytoplasmic segment spans residues 402-475; sequence AVCQCRRKNY…PAVAATSANL (74 aa). S-palmitoyl cysteine attachment occurs at residues cysteine 404 and cysteine 406. Residues 412-448 form an interaction with P53 region; sequence GQLDIFPARDAYHPMSEYPTYHTHGRYVPPSSTNRSP. Tyrosine 423 is subject to Phosphotyrosine; by PDGFR. An Interaction with GRB2 motif is present at residues 423-426; sequence YHPM. Tyrosine 432 bears the Phosphotyrosine mark. The segment at 435–460 is disordered; that stretch reads HGRYVPPSSTNRSPYEKVSEGNGGSS. Position 438 is a phosphotyrosine; by PDGFR (tyrosine 438). The interval 443–450 is required for interaction with GSK3B; sequence STNRSPYE. Threonine 444 bears the Phosphothreonine; by PKC/PRKCD mark. Position 447 is a phosphoserine; by GSK3-beta (serine 447). Tyrosine 449 bears the Phosphotyrosine; by CSK, EGFR and SRC mark. An Interaction with SRC and ESR1 motif is present at residues 449-452; it reads YEKV. Residues 453–461 form a required for interaction with beta- and gamma-catenins region; that stretch reads SEGNGGSSL. Tyrosine 463 is subject to Phosphotyrosine. The Required for interaction with AP1S2 motif lies at 463–466; sequence YTNP.

The alpha subunit forms a tight, non-covalent heterodimeric complex with the proteolytically-released beta-subunit. Binds directly the SH2 domain of GRB2, and forms a MUC1/GRB2/SOS1 complex involved in RAS signaling. The cytoplasmic tail (MUC1CT) interacts with several proteins such as SRC, CTNNB1 and ERBs. Interaction with the SH2 domain of CSK decreases interaction with GSK3B. Interacts with CTNNB1/beta-catenin and JUP/gamma-catenin and promotes cell adhesion. Interaction with JUP/gamma-catenin is induced by heregulin. Binds PRKCD, ERBB2, ERBB3 and ERBB4. Heregulin (HRG) stimulates the interaction with ERBB2 and, to a much lesser extent, the interaction with ERBB3 and ERBB4. Interacts with P53 in response to DNA damage. Interacts with KLF4. Interacts with estrogen receptor alpha/ESR1, through its DNA-binding domain, and stimulates its transcription activity. Binds ADAM17. Probably both N- and O-glycosylated (in repeat region). Post-translationally, proteolytic cleavage in the SEA domain occurs in the endoplasmic reticulum by an autoproteolytic mechanism and requires the full-length SEA domain as well as requiring a Ser, Thr or Cys residue at the P + 1 site. Ectodomain shedding is mediated by ADAM17 in uterine epithelial cells. In terms of processing, dual palmitoylation on cysteine residues in the CQC motif is required for recycling from endosomes back to the plasma membrane. Phosphorylated on tyrosines and serine residues in the C-terminal. Phosphorylation on tyrosines in the C-terminal increases the nuclear location of MUC1 and beta-catenin. Phosphorylation by PKC delta induces binding of MUC1 to beta-catenin/CTNNB1 and thus decreases the formation of the beta-catenin/E-cadherin complex. Src-mediated phosphorylation inhibits interaction with GSK3B. Csk- or Src- or EGFR-mediated phosphorylation on Tyr-449 increases binding to beta-catenin/CTNNB1. GSK3B-mediated phosphorylation on Ser-447 decreases this interaction but restores the formation of the beta-cadherin/E-cadherin complex. On T-cell receptor activation, phosphorylated by LCK. PDGFR-mediated phosphorylation increases nuclear colocalization of MUC1CT and CTNNB1.

The protein localises to the apical cell membrane. Its subcellular location is the cell membrane. It is found in the cytoplasm. The protein resides in the nucleus. In terms of biological role, the alpha subunit has cell adhesive properties. Can act both as an adhesion and an anti-adhesion protein. May provide a protective layer on epithelial cells against bacterial and enzyme attack. Its function is as follows. The beta subunit contains a C-terminal domain which is involved in cell signaling, through phosphorylations and protein-protein interactions. Modulates signaling in ERK, Src and NF-kappaB pathways. In activated T-cells, influences directly or indirectly the Ras/MAPK pathway. Promotes tumor progression. Regulates P53-mediated transcription and determines cell fate in the genotoxic stress response. Binds, together with KLF4, the PE21 promoter element of P53 and represses P53 activity. This chain is Mucin-1 (MUC1), found in Hylobates lar (Lar gibbon).